The following is a 384-amino-acid chain: Cytochrome b (384 aa).

Helical transmembrane passes span 32–52, 76–98, 113–133, and 179–199; these read LGSLLGLCLVIQITTGIFLAM, WLIRYMHTNGASFFFICMYIHIG, VWTVGVIIFILTMAAAFLGYC, and FFTFHYLVPFIIAAMVIMHLM. Residues His82 and His96 each coordinate heme b. Heme b contacts are provided by His183 and His197. A ubiquinone is bound at residue His202. 4 helical membrane-spanning segments follow: residues 225-245, 289-309, 321-341, and 348-368; these read FIFKDLVTVFVFMIFFSLFVF, LGGVITMFGTILVLLMLPITD, LSKFFFFLFITNFILLGKLGE, and FILMGQICTFIYFAYFLILVP.

Belongs to the cytochrome b family. Fungal cytochrome b-c1 complex contains 10 subunits; 3 respiratory subunits, 2 core proteins and 5 low-molecular weight proteins. Cytochrome b-c1 complex is a homodimer. Heme b serves as cofactor.

The protein localises to the mitochondrion inner membrane. Component of the ubiquinol-cytochrome c reductase complex (complex III or cytochrome b-c1 complex) that is part of the mitochondrial respiratory chain. The b-c1 complex mediates electron transfer from ubiquinol to cytochrome c. Contributes to the generation of a proton gradient across the mitochondrial membrane that is then used for ATP synthesis. In Eremothecium gossypii (strain ATCC 10895 / CBS 109.51 / FGSC 9923 / NRRL Y-1056) (Yeast), this protein is Cytochrome b (COB).